Here is a 426-residue protein sequence, read N- to C-terminus: Serine--tRNA ligase (426 aa).

229–231 serves as a coordination point for L-serine; it reads TAE. ATP-binding positions include 260-262 and Val276; that span reads RKE. Glu283 provides a ligand contact to L-serine. Residue 349–352 coordinates ATP; it reads EVTS. Thr384 serves as a coordination point for L-serine.

It belongs to the class-II aminoacyl-tRNA synthetase family. Type-1 seryl-tRNA synthetase subfamily. As to quaternary structure, homodimer. The tRNA molecule binds across the dimer.

The protein resides in the cytoplasm. It catalyses the reaction tRNA(Ser) + L-serine + ATP = L-seryl-tRNA(Ser) + AMP + diphosphate + H(+). The enzyme catalyses tRNA(Sec) + L-serine + ATP = L-seryl-tRNA(Sec) + AMP + diphosphate + H(+). It participates in aminoacyl-tRNA biosynthesis; selenocysteinyl-tRNA(Sec) biosynthesis; L-seryl-tRNA(Sec) from L-serine and tRNA(Sec): step 1/1. Functionally, catalyzes the attachment of serine to tRNA(Ser). Is also able to aminoacylate tRNA(Sec) with serine, to form the misacylated tRNA L-seryl-tRNA(Sec), which will be further converted into selenocysteinyl-tRNA(Sec). This chain is Serine--tRNA ligase, found in Treponema pallidum (strain Nichols).